We begin with the raw amino-acid sequence, 121 residues long: MAKTNLKTLARAKRISRIRKKISGTSERPRLRVFKSNKHIYAQIIDDASGKSLVAMSTVDKQFDLGDESGKTAAAKKVGVVLAERATAAGIKKVIFDRGGYIYHGRVKSLSEGAREGGLDF.

Belongs to the universal ribosomal protein uL18 family. Part of the 50S ribosomal subunit; part of the 5S rRNA/L5/L18/L25 subcomplex. Contacts the 5S and 23S rRNAs.

In terms of biological role, this is one of the proteins that bind and probably mediate the attachment of the 5S RNA into the large ribosomal subunit, where it forms part of the central protuberance. The chain is Large ribosomal subunit protein uL18 from Desulfotalea psychrophila (strain LSv54 / DSM 12343).